We begin with the raw amino-acid sequence, 202 residues long: Holliday junction branch migration complex subunit RuvA (202 aa).

The domain I stretch occupies residues 1–64 (MIGRLSGTLL…EDAHLLFGFA (64 aa)). Residues 65–143 (GRAERELFRQ…SLPSADLLSP (79 aa)) form a domain II region. A flexible linker region spans residues 144 to 152 (APAAGAALL). The domain III stretch occupies residues 153–202 (VENDERADISQALQALGYSAREAEAALKSVPDGTDVATGIRLALKALARP).

It belongs to the RuvA family. In terms of assembly, homotetramer. Forms an RuvA(8)-RuvB(12)-Holliday junction (HJ) complex. HJ DNA is sandwiched between 2 RuvA tetramers; dsDNA enters through RuvA and exits via RuvB. An RuvB hexamer assembles on each DNA strand where it exits the tetramer. Each RuvB hexamer is contacted by two RuvA subunits (via domain III) on 2 adjacent RuvB subunits; this complex drives branch migration. In the full resolvosome a probable DNA-RuvA(4)-RuvB(12)-RuvC(2) complex forms which resolves the HJ.

It localises to the cytoplasm. Its function is as follows. The RuvA-RuvB-RuvC complex processes Holliday junction (HJ) DNA during genetic recombination and DNA repair, while the RuvA-RuvB complex plays an important role in the rescue of blocked DNA replication forks via replication fork reversal (RFR). RuvA specifically binds to HJ cruciform DNA, conferring on it an open structure. The RuvB hexamer acts as an ATP-dependent pump, pulling dsDNA into and through the RuvAB complex. HJ branch migration allows RuvC to scan DNA until it finds its consensus sequence, where it cleaves and resolves the cruciform DNA. In Laribacter hongkongensis (strain HLHK9), this protein is Holliday junction branch migration complex subunit RuvA.